A 70-amino-acid polypeptide reads, in one-letter code: Small ribosomal subunit protein bS21 (70 aa).

The segment at 43-70 (TERKRKAAAAVKRQHKRLRSLTLPPKLY) is disordered. Over residues 45–61 (RKRKAAAAVKRQHKRLR) the composition is skewed to basic residues.

The protein belongs to the bacterial ribosomal protein bS21 family.

In Dechloromonas aromatica (strain RCB), this protein is Small ribosomal subunit protein bS21.